Here is a 338-residue protein sequence, read N- to C-terminus: Solute carrier family 35 member G4 (338 aa).

The disordered stretch occupies residues 1–29 (MAGSHPYFNLPDSTHPSPPSTPPSLHWHQ). 7 consecutive transmembrane segments (helical) span residues 37–57 (TNGL…VGPL), 160–180 (CGLL…LWTL), 190–210 (GLGY…LLVY), 221–241 (TVAF…LFVL), 250–270 (LLSW…FTCV), 281–301 (LVCA…YFML), and 305–325 (VAPS…IITA). The EamA 1 domain maps to 49–174 (LPAGFVGPLS…SILGLIIIVG (126 aa)). In terms of domain architecture, EamA 2 spans 272-325 (YAVTKAHPALVCAVLHSEVVMALILQYFMLHETVAPSDIMGAGVVLGSIAIITA).

This sequence belongs to the SLC35G solute transporter family.

Its subcellular location is the membrane. This is Solute carrier family 35 member G4 (SLC35G4) from Homo sapiens (Human).